Here is a 444-residue protein sequence, read N- to C-terminus: Probable glycine dehydrogenase (decarboxylating) subunit 1 (444 aa).

Belongs to the GcvP family. N-terminal subunit subfamily. In terms of assembly, the glycine cleavage system is composed of four proteins: P, T, L and H. In this organism, the P 'protein' is a heterodimer of two subunits.

It carries out the reaction N(6)-[(R)-lipoyl]-L-lysyl-[glycine-cleavage complex H protein] + glycine + H(+) = N(6)-[(R)-S(8)-aminomethyldihydrolipoyl]-L-lysyl-[glycine-cleavage complex H protein] + CO2. In terms of biological role, the glycine cleavage system catalyzes the degradation of glycine. The P protein binds the alpha-amino group of glycine through its pyridoxal phosphate cofactor; CO(2) is released and the remaining methylamine moiety is then transferred to the lipoamide cofactor of the H protein. The sequence is that of Probable glycine dehydrogenase (decarboxylating) subunit 1 from Carboxydothermus hydrogenoformans (strain ATCC BAA-161 / DSM 6008 / Z-2901).